A 194-amino-acid polypeptide reads, in one-letter code: Orotate phosphoribosyltransferase (194 aa).

5-phospho-alpha-D-ribose 1-diphosphate-binding positions include Arg102, Lys103, Lys106, His108, and 129 to 137 (EDVVTTGGS). Orotate is bound by residues Thr133 and Arg161.

Belongs to the purine/pyrimidine phosphoribosyltransferase family. PyrE subfamily. In terms of assembly, homodimer. Mg(2+) serves as cofactor.

It carries out the reaction orotidine 5'-phosphate + diphosphate = orotate + 5-phospho-alpha-D-ribose 1-diphosphate. The protein operates within pyrimidine metabolism; UMP biosynthesis via de novo pathway; UMP from orotate: step 1/2. Functionally, catalyzes the transfer of a ribosyl phosphate group from 5-phosphoribose 1-diphosphate to orotate, leading to the formation of orotidine monophosphate (OMP). In Synechococcus sp. (strain CC9902), this protein is Orotate phosphoribosyltransferase.